Consider the following 344-residue polypeptide: MFTSTGSNGLYKAPLSKSLLLVPSAISILLTLLFQHYQKFFAYNLQAIKEDFQIWRLVCGRVICLDLKDTFCSSLLIYNFRIFERRYGSRKFSSFLLGAWTLSALFDLLLVEAAQYVFGITINSLPSGFLGPVFALFVPFYCSIPRVQVTQVLGYFSITNKTLVYILGLQLLTSGSYIWILALSGLISGICYNSSILKVHRILCVPSWVAKIFSWTLEPIFSSAEPTNEIRVGMGATVDIQRQQRMELLDRQIMMSQVAQMRRQRQQQGGMINWNRLFPPLRHRHNENYQDHHPSDQDTPPPTEVSEEQVARLMEMGFSRGDALEALRASNNDLNVATNFLLQH.

The signal sequence occupies residues 1-34 (MFTSTGSNGLYKAPLSKSLLLVPSAISILLTLLF). Residues 35–91 (QHYQKFFAYNLQAIKEDFQIWRLVCGRVICLDLKDTFCSSLLIYNFRIFERRYGSRK) are Extracellular-facing. A helical transmembrane segment spans residues 92–111 (FSSFLLGAWTLSALFDLLLV). At 112 to 123 (EAAQYVFGITIN) the chain is on the cytoplasmic side. The helical transmembrane segment at 124 to 142 (SLPSGFLGPVFALFVPFYC) threads the bilayer. Residues 143–162 (SIPRVQVTQVLGYFSITNKT) are Extracellular-facing. The N-linked (GlcNAc...) asparagine glycan is linked to Asn-160. A helical transmembrane segment spans residues 163–183 (LVYILGLQLLTSGSYIWILAL). Topologically, residues 184-344 (SGLISGICYN…NVATNFLLQH (161 aa)) are cytoplasmic. Positions 284-307 (RHNENYQDHHPSDQDTPPPTEVSE) are disordered. A compositionally biased stretch (basic and acidic residues) spans 286 to 296 (NENYQDHHPSD). The UBA domain maps to 304–344 (EVSEEQVARLMEMGFSRGDALEALRASNNDLNVATNFLLQH).

It is found in the endoplasmic reticulum membrane. Its function is as follows. Restricts trafficking of FAF2 from the endoplasmic reticulum to lipid droplets. May negatively regulate the canonical Wnt signaling pathway in the lymphocytes. The protein is Ubiquitin-associated domain-containing protein 2 (UBAC2) of Gallus gallus (Chicken).